A 321-amino-acid polypeptide reads, in one-letter code: Serpentine receptor class delta-63 (321 aa).

7 helical membrane-spanning segments follow: residues 14–34, 41–61, 83–103, 128–148, 190–208, 240–260, and 273–293; these read LVYM…YNFT, VKYF…MAFA, YIGP…GIVV, LWTL…IVII, AAMS…GTYW, NFQI…YFMI, and TITV…IYFI.

The protein belongs to the nematode receptor-like protein srd family.

The protein resides in the membrane. This is Serpentine receptor class delta-63 (srd-63) from Caenorhabditis elegans.